A 382-amino-acid chain; its full sequence is tRNA-specific 2-thiouridylase MnmA (382 aa).

ATP contacts are provided by residues 18–25 and Leu44; that span reads AMSGGVDS. The active-site Nucleophile is the Cys112. Cys112 and Cys209 are joined by a disulfide. Gly136 serves as a coordination point for ATP. The tract at residues 159–161 is interaction with tRNA; it reads RDQ. Cys209 (cysteine persulfide intermediate) is an active-site residue.

It belongs to the MnmA/TRMU family.

Its subcellular location is the cytoplasm. It catalyses the reaction S-sulfanyl-L-cysteinyl-[protein] + uridine(34) in tRNA + AH2 + ATP = 2-thiouridine(34) in tRNA + L-cysteinyl-[protein] + A + AMP + diphosphate + H(+). Its function is as follows. Catalyzes the 2-thiolation of uridine at the wobble position (U34) of tRNA, leading to the formation of s(2)U34. This is tRNA-specific 2-thiouridylase MnmA from Methylobacterium nodulans (strain LMG 21967 / CNCM I-2342 / ORS 2060).